Here is a 461-residue protein sequence, read N- to C-terminus: MPAPSTTLLIEGSFSELADEFAQYIDALRKTEPSLQAELSPLLEPLRQQEQSDAEPDRKQRDEVLKKLVSAATVLNTAPEKEIISAYNLLVHLVHHASDPDMFLSRICSYLAKPITSSPQFGPSLAISILSTIFNTLPATDSSRYHVLLAIVAVIRQSAQGVAFEALKPQLTAQLPTWLAAWELDEDEAQRLHLAIADAAQAAGDQELAQTHVVQALQTIPAADASKKEARDLAVRALTSALSHPAVFDFTPLTASDAVQALRTSDSTLFELLEIFTADTLDAYEAFVAATPLASISGGVLAPAADALQNKMRLLTLASLAASTPSRSLPYATIASALRVPAEDVEKWVIDTIRAGLVEGKLSQLRSEFLVHRATYRVFGEKQWAEVQGRLMVWRRSLENVLGVVRSERERFIRENLQAAQAAEEAAQGKSGDKKGDRRQRRDQPQQSQPAPEAATAVAAE.

The interval 42-61 (LLEPLRQQEQSDAEPDRKQR) is disordered. The PCI domain occupies 205–376 (DQELAQTHVV…SEFLVHRATY (172 aa)). The interval 422–461 (AAEEAAQGKSGDKKGDRRQRRDQPQQSQPAPEAATAVAAE) is disordered. Residues 431-444 (SGDKKGDRRQRRDQ) show a composition bias toward basic and acidic residues. The segment covering 445-461 (PQQSQPAPEAATAVAAE) has biased composition (low complexity).

It belongs to the eIF-3 subunit M family. Component of the eukaryotic translation initiation factor 3 (eIF-3) complex.

It is found in the cytoplasm. In terms of biological role, component of the eukaryotic translation initiation factor 3 (eIF-3) complex, which is involved in protein synthesis of a specialized repertoire of mRNAs and, together with other initiation factors, stimulates binding of mRNA and methionyl-tRNAi to the 40S ribosome. The eIF-3 complex specifically targets and initiates translation of a subset of mRNAs involved in cell proliferation. This chain is Eukaryotic translation initiation factor 3 subunit M, found in Aspergillus terreus (strain NIH 2624 / FGSC A1156).